The sequence spans 1073 residues: ATP-dependent helicase/deoxyribonuclease subunit B (1073 aa).

Belongs to the helicase family. AddB/RexB type 2 subfamily. As to quaternary structure, heterodimer of AddA and RexB. Requires Mg(2+) as cofactor.

Its function is as follows. The heterodimer acts as both an ATP-dependent DNA helicase and an ATP-dependent, dual-direction single-stranded exonuclease. Recognizes the chi site generating a DNA molecule suitable for the initiation of homologous recombination. This subunit has 5' -&gt; 3' nuclease activity but not helicase activity. The polypeptide is ATP-dependent helicase/deoxyribonuclease subunit B (Streptococcus equi subsp. zooepidemicus (strain H70)).